The sequence spans 334 residues: GTP 3',8-cyclase (334 aa).

The region spanning 11–236 is the Radical SAM core domain; that stretch reads GFNRKIDYLR…ESTESSMGPA (226 aa). Arg-20 is a GTP binding site. 2 residues coordinate [4Fe-4S] cluster: Cys-27 and Cys-31. Tyr-33 provides a ligand contact to S-adenosyl-L-methionine. A [4Fe-4S] cluster-binding site is contributed by Cys-34. Arg-69 contacts GTP. Gly-73 lines the S-adenosyl-L-methionine pocket. Thr-100 contacts GTP. Ser-124 provides a ligand contact to S-adenosyl-L-methionine. GTP is bound at residue Lys-161. Met-195 lines the S-adenosyl-L-methionine pocket. 2 residues coordinate [4Fe-4S] cluster: Cys-260 and Cys-263. 265–267 contacts GTP; sequence RVR. A [4Fe-4S] cluster-binding site is contributed by Cys-277.

Belongs to the radical SAM superfamily. MoaA family. In terms of assembly, monomer and homodimer. Requires [4Fe-4S] cluster as cofactor.

The catalysed reaction is GTP + AH2 + S-adenosyl-L-methionine = (8S)-3',8-cyclo-7,8-dihydroguanosine 5'-triphosphate + 5'-deoxyadenosine + L-methionine + A + H(+). The protein operates within cofactor biosynthesis; molybdopterin biosynthesis. In terms of biological role, catalyzes the cyclization of GTP to (8S)-3',8-cyclo-7,8-dihydroguanosine 5'-triphosphate. This chain is GTP 3',8-cyclase, found in Pseudomonas putida (strain ATCC 47054 / DSM 6125 / CFBP 8728 / NCIMB 11950 / KT2440).